The primary structure comprises 186 residues: Ribosome-recycling factor (186 aa).

This sequence belongs to the RRF family.

The protein resides in the cytoplasm. Its function is as follows. Responsible for the release of ribosomes from messenger RNA at the termination of protein biosynthesis. May increase the efficiency of translation by recycling ribosomes from one round of translation to another. This is Ribosome-recycling factor from Rickettsia bellii (strain OSU 85-389).